The sequence spans 222 residues: Putative RING finger protein ORF118 (222 aa).

An RING-type zinc finger spans residues 78-114 (CCICMAKNNRKEALPCQHNVCRDCYYKPMRNNCPVCN). The tract at residues 184–222 (IENRIHNNNNNNYDENNPDDLPVIHPPRRRHRQTAHISI) is disordered. The span at 189–198 (HNNNNNNYDE) shows a compositional bias: low complexity. Residues 209 to 222 (PPRRRHRQTAHISI) are compositionally biased toward basic residues.

This Magallana gigas (Pacific oyster) protein is Putative RING finger protein ORF118.